The sequence spans 1207 residues: Plasma membrane calcium-transporting ATPase 4 (1207 aa).

The Cytoplasmic portion of the chain corresponds to 1-100; the sequence is MTNPTEHTLP…KTFLELVWEA (100 aa). Phosphoserine is present on S13. Residues 101–121 traverse the membrane as a helical segment; the sequence is LQDVTLIILEIAAIISLVLSF. Residues 122 to 147 lie on the Extracellular side of the membrane; sequence YRPPGGENEQCGLAVTSPEDEGEAEA. The helical transmembrane segment at 148 to 168 threads the bilayer; it reads GWIEGAAILFSVIIVVLVTAF. At 169–368 the chain is on the cytoplasmic side; that stretch reads NDWSKEKQFR…LAVQIGKAGL (200 aa). The tract at residues 294-317 is disordered; it reads EEEKKKKGKKQGVPENRNKAKTQD. Residues S328 and S334 each carry the phosphoserine modification. Residues 369-389 traverse the membrane as a helical segment; that stretch reads IMSAITVLILILYFVIDNFVI. Residues 390 to 408 are Extracellular-facing; the sequence is QRRPWLAECTPIYVQYFVK. Residues 409–429 traverse the membrane as a helical segment; sequence FFIIGVTVLVVAVPEGLPLAV. Residues 430–843 lie on the Cytoplasmic side of the membrane; that stretch reads TISLAYSVKK…RNVYDSISKF (414 aa). The active-site 4-aspartylphosphate intermediate is the D465. The Mg(2+) site is built by D785 and D789. The helical transmembrane segment at 844-864 threads the bilayer; that stretch reads LQFQLTVNVVAVIVAFTGACI. Residues 865–871 are Extracellular-facing; that stretch reads TQDSPLK. The chain crosses the membrane as a helical span at residues 872–892; it reads AVQMLWVNLIMDTFASLALAT. Over 893 to 918 the chain is Cytoplasmic; sequence EPPTDSLLKRRPYGRNKPLISRTMMK. A helical transmembrane segment spans residues 919–939; that stretch reads NILGHAVYQLTVIFFLVFAGE. Over 940–957 the chain is Extracellular; that stretch reads KFFDIDSGRRAPLHSPPS. The helical transmembrane segment at 958 to 977 threads the bilayer; the sequence is QHYTIIFNTFVLMQLFNEIN. The Cytoplasmic portion of the chain corresponds to 978-994; it reads SRKIHGERNVFSGIFRN. A helical membrane pass occupies residues 995–1015; that stretch reads LIFCSVVLGTFISQIIIVEFG. At 1016–1028 the chain is on the extracellular side; sequence GKPFSCTKLTLSQ. A helical membrane pass occupies residues 1029–1049; that stretch reads WFWCLFIGIGELLWGQVISTI. Over 1050–1207 the chain is Cytoplasmic; it reads PTQSLKFLKE…SPLHSLETSV (158 aa). The segment at 1086 to 1103 is calmodulin-binding subdomain A; that stretch reads LRRGQILWFRGLNRIQTQ. At T1102 the chain carries Phosphothreonine; by PKC. Residues 1104-1113 form a calmodulin-binding subdomain B region; it reads IKVVKAFHSS. The tract at residues 1159–1181 is disordered; it reads VSKPGTKTSSLDGEVTPQTNKNN. Positions 1163-1181 are enriched in polar residues; it reads GTKTSSLDGEVTPQTNKNN.

It belongs to the cation transport ATPase (P-type) (TC 3.A.3) family. Type IIB subfamily. As to quaternary structure, interacts with PDZD11. Interacts with SLC35G1 and STIM1. Interacts with calmodulin. As to expression, isoform 1 is detected in brain, heart, liver, testis and epididymis. Isoform 2 is detected in brain (at protein level), heart, seminal vesicle and epididymis. There is a shift in expression from isoform 1 to isoform 2 along the length of the epididymis from caput to cauda (at protein level).

It localises to the cell membrane. It is found in the cell projection. The protein resides in the cilium. Its subcellular location is the flagellum membrane. It catalyses the reaction Ca(2+)(in) + ATP + H2O = Ca(2+)(out) + ADP + phosphate + H(+). Activated by calcium/calmodulin. Calcium/calmodulin-regulated and magnesium-dependent enzyme that catalyzes the hydrolysis of ATP coupled with the transport of calcium out of the cell. By regulating sperm cells calcium homeostasis, may play a role in sperm motility. This chain is Plasma membrane calcium-transporting ATPase 4, found in Bos taurus (Bovine).